A 184-amino-acid chain; its full sequence is UPF0398 protein BALH_1408 (184 aa).

The protein belongs to the UPF0398 family.

This Bacillus thuringiensis (strain Al Hakam) protein is UPF0398 protein BALH_1408.